Reading from the N-terminus, the 291-residue chain is Phosphate import ATP-binding protein PstB (291 aa).

Residues 44–286 (VKAREVNVFY…PEEKRTQDYI (243 aa)) enclose the ABC transporter domain. Residue 76–83 (GPSGCGKS) participates in ATP binding.

It belongs to the ABC transporter superfamily. Phosphate importer (TC 3.A.1.7) family. As to quaternary structure, the complex is composed of two ATP-binding proteins (PstB), two transmembrane proteins (PstC and PstA) and a solute-binding protein (PstS).

It is found in the cell inner membrane. It catalyses the reaction phosphate(out) + ATP + H2O = ADP + 2 phosphate(in) + H(+). In terms of biological role, part of the ABC transporter complex PstSACB involved in phosphate import. Responsible for energy coupling to the transport system. This chain is Phosphate import ATP-binding protein PstB, found in Chelativorans sp. (strain BNC1).